The primary structure comprises 482 residues: G patch domain-containing protein 2-like (482 aa).

Serine 31, serine 86, and serine 88 each carry phosphoserine. The residue at position 91 (threonine 91) is a Phosphothreonine. Lysine 196 participates in a covalent cross-link: Glycyl lysine isopeptide (Lys-Gly) (interchain with G-Cter in SUMO2). Residues 198-214 (GRKERMECETDEQKQGS) show a composition bias toward basic and acidic residues. 2 disordered regions span residues 198 to 247 (GRKE…DDEQ) and 413 to 482 (KRKR…PGYS). A compositionally biased stretch (low complexity) spans 220 to 230 (ECETSSVCSSS). Polar residues predominate over residues 439–450 (TPASQAPKSPSS). A phosphoserine mark is found at serine 447 and serine 449. Positions 456–469 (TSAAEKATDATTAT) are enriched in low complexity.

The protein is G patch domain-containing protein 2-like (GPATCH2L) of Homo sapiens (Human).